Here is a 163-residue protein sequence, read N- to C-terminus: Staphylokinase (163 aa).

The first 27 residues, 1–27 (MLKRSLLFLTVLLLLFSFSSITNEVSA), serve as a signal peptide directing secretion.

It belongs to the staphylokinase family.

It is found in the secreted. Potent plasminogen activator that converts plasminogen into plasmin. It forms a 1:1 complex with plasmin, which in turn activates other plasminogen molecules. This Staphylococcus phage phi13 (Bacteriophage phi-13) protein is Staphylokinase (sak).